The primary structure comprises 240 residues: Phosducin-like protein 2 (240 aa).

One can recognise a Phosducin domain in the interval 54-214; that stretch reads QRDKKIDDMS…MLGQAGAVPT (161 aa). Phosphoserine occurs at positions 63 and 73. Positions 99-240 are thioredoxin fold; the sequence is FGSVREISGQ…DLEDKSSDFY (142 aa).

Belongs to the phosducin family.

Its subcellular location is the cytoplasm. Modulates the activation of caspases during apoptosis. This is Phosducin-like protein 2 from Drosophila melanogaster (Fruit fly).